The primary structure comprises 594 residues: Spermidine/putrescine import ATP-binding protein PotA (594 aa).

Positions 24–435 constitute an ABC transporter domain; the sequence is IEIKKINKTY…PANNWVANFI (412 aa). 57 to 64 serves as a coordination point for ATP; it reads GPSGCGKT. The interval 125 to 304 is insert; that stretch reads RKPIENVSAD…EWFDKKKLTR (180 aa).

This sequence belongs to the ABC transporter superfamily. Spermidine/putrescine importer (TC 3.A.1.11.1) family. As to quaternary structure, the complex is composed of two ATP-binding proteins (PotA), two transmembrane proteins (PotB and PotC) and a solute-binding protein (PotD).

It is found in the cell membrane. The enzyme catalyses ATP + H2O + polyamine-[polyamine-binding protein]Side 1 = ADP + phosphate + polyamineSide 2 + [polyamine-binding protein]Side 1.. Its function is as follows. Part of the ABC transporter complex PotABCD involved in spermidine/putrescine import. Responsible for energy coupling to the transport system. This is Spermidine/putrescine import ATP-binding protein PotA from Malacoplasma penetrans (strain HF-2) (Mycoplasma penetrans).